A 624-amino-acid polypeptide reads, in one-letter code: Glutamine--fructose-6-phosphate aminotransferase [isomerizing] (624 aa).

C2 (nucleophile; for GATase activity) is an active-site residue. One can recognise a Glutamine amidotransferase type-2 domain in the interval 2–226; that stretch reads CGIVGYVGQQ…QDQAVVLTAD (225 aa). SIS domains lie at 297 to 436 and 469 to 614; these read SDQE…ARGT and LAQR…VDKP. K619 serves as the catalytic For Fru-6P isomerization activity.

As to quaternary structure, homodimer.

Its subcellular location is the cytoplasm. The enzyme catalyses D-fructose 6-phosphate + L-glutamine = D-glucosamine 6-phosphate + L-glutamate. Its function is as follows. Catalyzes the first step in hexosamine metabolism, converting fructose-6P into glucosamine-6P using glutamine as a nitrogen source. In Mycolicibacterium paratuberculosis (strain ATCC BAA-968 / K-10) (Mycobacterium paratuberculosis), this protein is Glutamine--fructose-6-phosphate aminotransferase [isomerizing].